Here is a 265-residue protein sequence, read N- to C-terminus: Probable ribose-5-phosphate isomerase 2 (265 aa).

Ala-2 is modified (N-acetylalanine). At Ser-96 the chain carries Phosphoserine.

This sequence belongs to the ribose 5-phosphate isomerase family.

It is found in the cytoplasm. It catalyses the reaction aldehydo-D-ribose 5-phosphate = D-ribulose 5-phosphate. The protein operates within carbohydrate degradation; pentose phosphate pathway; D-ribose 5-phosphate from D-ribulose 5-phosphate (non-oxidative stage): step 1/1. Its function is as follows. Catalyzes the reversible conversion of ribose-5-phosphate to ribulose 5-phosphate. The polypeptide is Probable ribose-5-phosphate isomerase 2 (RPI2) (Arabidopsis thaliana (Mouse-ear cress)).